The following is a 557-amino-acid chain: Alpha-barbatene synthase (557 aa).

Residues R273, D310, D314, R451, and D454 each coordinate (2E,6E)-farnesyl diphosphate. Residues D310 and D314 each contribute to the Mg(2+) site. The short motif at 310-314 (DDACD) is the DDXXD motif element. Mg(2+)-binding residues include D454, D455, and D462.

It belongs to the terpene synthase family. Tpsa subfamily. In terms of assembly, monomer. It depends on Mg(2+) as a cofactor. Mn(2+) serves as cofactor. In terms of tissue distribution, expressed exclusively in flowers. Expressed in intrafloral nectaries and in the funiculus within the ovules.

It localises to the cytoplasm. It catalyses the reaction (2E,6E)-farnesyl diphosphate = (+)-alpha-barbatene + diphosphate. The enzyme catalyses (2E,6E)-farnesyl diphosphate = (+)-thujopsene + diphosphate. The catalysed reaction is (2E,6E)-farnesyl diphosphate = (+)-beta-chamigrene + diphosphate. It carries out the reaction (2E,6E)-farnesyl diphosphate = (+)-beta-barbatene + diphosphate. It catalyses the reaction (2E,6E)-farnesyl diphosphate = beta-sesquiphellandrene + diphosphate. The enzyme catalyses (2E,6E)-farnesyl diphosphate = (S)-beta-bisabolene + diphosphate. The catalysed reaction is (2E,6E)-farnesyl diphosphate = (-)-alpha-cuprenene + diphosphate. It carries out the reaction (2E,6E)-farnesyl diphosphate = alpha-zingiberene + diphosphate. It catalyses the reaction (2E,6E)-farnesyl diphosphate = beta-acoradiene + diphosphate. The enzyme catalyses (2E,6E)-farnesyl diphosphate = (E)-beta-farnesene + diphosphate. Its pathway is secondary metabolite biosynthesis; terpenoid biosynthesis. Its function is as follows. Involved in the biosynthesis of over 15 sesquiterpenes (C15). The major products are (+)-alpha-barbatene (27.3%), (+)-thujopsene (17.8%) and (+)-beta-chamigrene (9.9%). Can use farnesyl diphosphate or geranyl diphosphate as substrates, but not geranylgeranyl diphosphate. This is Alpha-barbatene synthase from Arabidopsis thaliana (Mouse-ear cress).